Here is a 285-residue protein sequence, read N- to C-terminus: Single myb histone 3 (285 aa).

A disordered region spans residues 1-35 (MGAPKQKWTSEEEDALRRGVRKHGAGKWRTIQKDP). The HTH myb-type domain maps to 1–60 (MGAPKQKWTSEEEDALRRGVRKHGAGKWRTIQKDPQFSPILSSRSNIDLKDKWRNLSFSA). A DNA-binding region (H-T-H motif) is located at residues 28–56 (WRTIQKDPQFSPILSSRSNIDLKDKWRNL). The H15 domain occupies 113 to 181 (TPPKYGAMIM…KVDNFYRLPD (69 aa)). Residues 226-255 (VKVTDAEAKAHDAHDQMMEAERMLKMAEDT) are a coiled coil.

Belongs to the histone H1/H5 family. SMH subfamily. In terms of assembly, forms a homodimer and heterodimers.

Its subcellular location is the nucleus. It localises to the chromosome. The protein resides in the nucleolus. It is found in the telomere. Its function is as follows. Binds preferentially double-stranded telomeric repeats, but may also bind to the single telomeric strand. In Zea mays (Maize), this protein is Single myb histone 3 (SMH3).